The following is a 202-amino-acid chain: FMN-dependent NADH:quinone oxidoreductase (202 aa).

FMN is bound by residues S9, 15–17 (SVS), 95–98 (MYNF), and 139–142 (SRGG).

Belongs to the azoreductase type 1 family. Homodimer. FMN serves as cofactor.

The enzyme catalyses 2 a quinone + NADH + H(+) = 2 a 1,4-benzosemiquinone + NAD(+). It catalyses the reaction N,N-dimethyl-1,4-phenylenediamine + anthranilate + 2 NAD(+) = 2-(4-dimethylaminophenyl)diazenylbenzoate + 2 NADH + 2 H(+). Functionally, quinone reductase that provides resistance to thiol-specific stress caused by electrophilic quinones. Its function is as follows. Also exhibits azoreductase activity. Catalyzes the reductive cleavage of the azo bond in aromatic azo compounds to the corresponding amines. The protein is FMN-dependent NADH:quinone oxidoreductase of Laribacter hongkongensis (strain HLHK9).